Here is a 294-residue protein sequence, read N- to C-terminus: DGYICNNGMDKEERKMCGLLLLPLRSVSPSAYLAAVNAASERAPMIYPRAVSEGQFYSPPESLAGSEEDLDEEGLGRRAVSPQEKALVRQGKEAMAVVEQILAQEENWKFEKNNDVGDSVYTLEIPFHGKTFILKAFMQCPAELVYQEVILQPEKMAQWNKTVSGCQILQRVDDNTLVSYDIASGAAGGVVSARDFVNVRRVERKRDCYVSAGMATDHDGKPPHSRYVRGENGPGGFVVLKSSSNPSVCTFIWVLNTDLKGRLPRYLIHQSLAATMFEFMAHLRQRIRDLRSTR.

Positions 1–66 constitute an MENTAL domain; sequence DGYICNNGMD…YSPPESLAGS (66 aa). An FFAT motif is present at residues 55–61; it reads QFYSPPE. A disordered region spans residues 58 to 77; the sequence is SPPESLAGSEEDLDEEGLGR. Residues 79 to 292 enclose the START domain; the sequence is AVSPQEKALV…LRQRIRDLRS (214 aa).

This sequence belongs to the STARD3 family. Homodimer. Phosphorylated. Phosphorylation allows the tethering of two membranes that participates in the formation of ER-endosome contacts. Phosphorylation of FFAT motif drives membrane tethering between the endoplasmic reticulum and late endosomes that in turn allows the efficient transport of sterol mediated by the START domain.

The protein resides in the late endosome membrane. The catalysed reaction is cholesterol(in) = cholesterol(out). Sterol-binding protein that mediates cholesterol transport from the endoplasmic reticulum to endosomes. The sterol transport mechanism is triggered by phosphorylation of FFAT motif that leads to membrane tethering between the endoplasmic reticulum and late endosomes. Acts as a lipid transfer protein that redirects sterol to the endosome at the expense of the cell membrane and favors membrane formation inside endosomes. The protein is StAR-related lipid transfer protein 3 of Salvelinus fontinalis (Brook trout).